A 1239-amino-acid chain; its full sequence is DNA topoisomerase 2 (1239 aa).

Residues Asn65, Asn96, 124–126, 137–144, and 354–356 each bind ATP; these read SSN, GRHGYGAK, and QSK. The 115-residue stretch at 434-548 folds into the Toprim domain; sequence RTLIVTEGDS…SLLQHNPGYI (115 aa). Mg(2+) contacts are provided by Glu440, Asp517, and Asp519. The Topo IIA-type catalytic domain maps to 685-1101; the sequence is IPHCVDGLKP…TPVKMWLTDL (417 aa). Tyr775 serves as the catalytic O-(5'-phospho-DNA)-tyrosine intermediate. The tract at residues 956-965 is interaction with DNA; sequence ALSQRIYING. Positions 1167 to 1206 are disordered; it reads PASKRKPEDTYGGALSSGGSTRNVGKRLTGARGAKKKKVV.

The protein belongs to the type II topoisomerase family. As to quaternary structure, homodimer. It depends on Mg(2+) as a cofactor. Mn(2+) is required as a cofactor. Requires Ca(2+) as cofactor.

It localises to the nucleus. Its subcellular location is the mitochondrion matrix. It is found in the kinetoplast. It catalyses the reaction ATP-dependent breakage, passage and rejoining of double-stranded DNA.. Control of topological states of DNA by transient breakage and subsequent rejoining of DNA strands. Topoisomerase II makes double-strand breaks. The protein is DNA topoisomerase 2 (TOP2) of Crithidia fasciculata.